Here is a 94-residue protein sequence, read N- to C-terminus: uncharacterized protein (94 aa).

A compositionally biased stretch (polar residues) spans 33-42 (INSLPTFTKP). The tract at residues 33-57 (INSLPTFTKPNDSNNNVNKSSNDGV) is disordered. Positions 43–57 (NDSNNNVNKSSNDGV) are enriched in low complexity.

This is an uncharacterized protein from Dictyostelium discoideum (Social amoeba).